Consider the following 411-residue polypeptide: ATP-dependent RNA helicase eIF4A (411 aa).

Residues 1–23 (MSKPEDTSAAAAAPAGEAGNNLN) are disordered. Residues 9 to 19 (AAAAAPAGEAG) show a composition bias toward low complexity. Positions 38–66 (DNFDNMELKEELLRGVYAYGFERPSAIQA) match the Q motif motif. Residues 69-239 (IVPVIKGHDV…KKFMRDPIRI (171 aa)) enclose the Helicase ATP-binding domain. 82-89 (AQSGTGKT) is an ATP binding site. A DEAD box motif is present at residues 187–190 (DEAD). The Helicase C-terminal domain occupies 250-411 (GIKQFYVAVE…EMPLNVADLI (162 aa)).

This sequence belongs to the DEAD box helicase family. eIF4A subfamily. In terms of assembly, component of the eIF4F complex, which composition varies with external and internal environmental conditions. It is composed of at least eIF4A, eIF4E and eIF4G.

The protein localises to the cytoplasm. It carries out the reaction ATP + H2O = ADP + phosphate + H(+). ATP-dependent RNA helicase which is a subunit of the eIF4F complex involved in cap recognition and is required for mRNA binding to ribosome. In the current model of translation initiation, eIF4A unwinds RNA secondary structures in the 5'-UTR of mRNAs which is necessary to allow efficient binding of the small ribosomal subunit, and subsequent scanning for the initiator codon. In Mycosarcoma maydis (Corn smut fungus), this protein is ATP-dependent RNA helicase eIF4A (TIF1).